The chain runs to 407 residues: Probable succinyl-diaminopimelate desuccinylase (407 aa).

Histidine 72 provides a ligand contact to Zn(2+). The active site involves aspartate 74. Aspartate 105 serves as a coordination point for Zn(2+). Catalysis depends on glutamate 139, which acts as the Proton acceptor. Zn(2+) contacts are provided by glutamate 140, glutamate 165, and histidine 378.

This sequence belongs to the peptidase M20A family. It depends on Zn(2+) as a cofactor. Co(2+) serves as cofactor.

The enzyme catalyses N-succinyl-(2S,6S)-2,6-diaminopimelate + H2O = (2S,6S)-2,6-diaminopimelate + succinate. The protein operates within amino-acid biosynthesis; L-lysine biosynthesis via DAP pathway; LL-2,6-diaminopimelate from (S)-tetrahydrodipicolinate (succinylase route): step 3/3. This Staphylococcus aureus (strain MSSA476) protein is Probable succinyl-diaminopimelate desuccinylase (dapE).